A 291-amino-acid polypeptide reads, in one-letter code: 4-hydroxy-tetrahydrodipicolinate synthase (291 aa).

A pyruvate-binding site is contributed by threonine 44. The Proton donor/acceptor role is filled by tyrosine 132. Lysine 160 serves as the catalytic Schiff-base intermediate with substrate. Isoleucine 202 contributes to the pyruvate binding site.

This sequence belongs to the DapA family. In terms of assembly, homotetramer; dimer of dimers.

It is found in the cytoplasm. It carries out the reaction L-aspartate 4-semialdehyde + pyruvate = (2S,4S)-4-hydroxy-2,3,4,5-tetrahydrodipicolinate + H2O + H(+). Its pathway is amino-acid biosynthesis; L-lysine biosynthesis via DAP pathway; (S)-tetrahydrodipicolinate from L-aspartate: step 3/4. Functionally, catalyzes the condensation of (S)-aspartate-beta-semialdehyde [(S)-ASA] and pyruvate to 4-hydroxy-tetrahydrodipicolinate (HTPA). The protein is 4-hydroxy-tetrahydrodipicolinate synthase of Syntrophobacter fumaroxidans (strain DSM 10017 / MPOB).